A 542-amino-acid polypeptide reads, in one-letter code: Chaperonin GroEL 3 (542 aa).

ATP is bound by residues 30–33, Lys-51, 87–91, Gly-415, and Asp-496; these read TLGP and DGTTT.

Belongs to the chaperonin (HSP60) family. Forms a cylinder of 14 subunits composed of two heptameric rings stacked back-to-back. Interacts with the co-chaperonin GroES.

The protein resides in the cytoplasm. It carries out the reaction ATP + H2O + a folded polypeptide = ADP + phosphate + an unfolded polypeptide.. Functionally, together with its co-chaperonin GroES, plays an essential role in assisting protein folding. The GroEL-GroES system forms a nano-cage that allows encapsulation of the non-native substrate proteins and provides a physical environment optimized to promote and accelerate protein folding. This Rhizobium johnstonii (strain DSM 114642 / LMG 32736 / 3841) (Rhizobium leguminosarum bv. viciae) protein is Chaperonin GroEL 3.